Consider the following 859-residue polypeptide: Active breakpoint cluster region-related protein (859 aa).

Positions 31–84 are disordered; sequence AEGHEEQKGPPEGSETMPYIDESPTMSPQLSARSQGGGESISPTPPEGLAPGVE. Residues 54–64 show a composition bias toward polar residues; it reads PTMSPQLSARS. Ser-57 is modified (phosphoserine). The DH domain occupies 91-284; sequence MRKLVLSGFL…QNFLSSINED (194 aa). The region spanning 301–459 is the PH domain; that stretch reads QLVKDGFLVE…WREAIQKLQK (159 aa). One can recognise a C2 domain in the interval 484 to 613; that stretch reads TVHNIPVTSN…ESKNWHTDVI (130 aa). In terms of domain architecture, Rho-GAP spans 647–845; sequence VKISVVTKRE…YYLQHPPISF (199 aa).

Interacts with DLG4. In terms of tissue distribution, expressed in brain, including the cortex, hippocampus, cerebellum, and brainstem, as well as the spinal cord (at protein level).

The protein localises to the cell projection. It localises to the dendritic spine. The protein resides in the axon. It is found in the synapse. Protein with a unique structure having two opposing regulatory activities toward small GTP-binding proteins. The C-terminus is a GTPase-activating protein domain which stimulates GTP hydrolysis by RAC1, RAC2 and CDC42. Accelerates the intrinsic rate of GTP hydrolysis of RAC1 or CDC42, leading to down-regulation of the active GTP-bound form. The central Dbl homology (DH) domain functions as guanine nucleotide exchange factor (GEF) that modulates the GTPases CDC42, RHOA and RAC1. Promotes the conversion of CDC42, RHOA and RAC1 from the GDP-bound to the GTP-bound form. Functions as an important negative regulator of neuronal RAC1 activity. Regulates macrophage functions such as CSF-1 directed motility and phagocytosis through the modulation of RAC1 activity. The polypeptide is Active breakpoint cluster region-related protein (Rattus norvegicus (Rat)).